We begin with the raw amino-acid sequence, 145 residues long: MNFKYIVAVSFLIASAYARSVQNDEQSLSQRDVLEEESLREIRSIGAKILGGVKTFFKGALKELASTYLQRKRTAEEQHEVMKRLEAVMRDLDSLDHPEEASEREIRGFNQEEIANLFTKKEKRILGPVISKIGGVLGGLLKNLG.

Positions 1–18 (MNFKYIVAVSFLIASAYA) are cleaved as a signal peptide. Propeptides lie at residues 19 to 43 (RSVQ…REIR) and 74 to 124 (TAEE…KEKR). The residue at position 144 (leucine 144) is a Leucine amide.

This sequence belongs to the bombinin family. In terms of tissue distribution, expressed by the skin glands.

It is found in the secreted. Its function is as follows. Maximin-5 shows antibacterial activity against both Gram-positive and Gram-negative bacteria. The only exception is the resistance of E.coli. Also shows antimicrobial activity against fungi C.albicans, A.flavus and P.uticale. It has little hemolytic activity. It does not possess a significant cytotoxicity against tumor cell lines. It does not possess a significant anti-HIV activity. Functionally, maximin-H4 shows antibacterial activity against both Gram-positive and Gram-negative bacteria. It also shows antimicrobial activity against the fungus C.albicans. Shows strong hemolytic activity. In Bombina maxima (Giant fire-bellied toad), this protein is Maximins 5/H4 type 1.